Reading from the N-terminus, the 210-residue chain is Large ribosomal subunit protein uL16 (210 aa).

This sequence belongs to the universal ribosomal protein uL16 family. Component of the large ribosomal subunit. Mature ribosomes consist of a small (40S) and a large (60S) subunit. The 40S subunit contains about 33 different proteins and 1 molecule of RNA (18S). The 60S subunit contains about 49 different proteins and 3 molecules of RNA (28S, 5.8S and 5S).

Its subcellular location is the cytoplasm. Component of the large ribosomal subunit. Plays a role in the formation of actively translating ribosomes. In terms of biological role, (Microbial infection) Seems to bind to the leucine zipper of viral and cellular JUN. This is Large ribosomal subunit protein uL16 from Gallus gallus (Chicken).